A 210-amino-acid chain; its full sequence is Synaptosomal-associated protein 23 (210 aa).

Met1 carries the N-acetylmethionine modification. Phosphoserine occurs at positions 5, 20, 23, and 34. In terms of domain architecture, t-SNARE coiled-coil homology 1 spans 14-76 (HQVTDESLES…REAEKTLTEL (63 aa)). Residues 23 to 76 (STRRILGLAIESQDAGIKTITMLDEQGEQLNRIEEGMDQINKDMREAEKTLTEL) are a coiled coil. S-palmitoyl cysteine attachment occurs at residues Cys79, Cys80, Cys83, Cys85, and Cys87. The tract at residues 104–136 (GDGGDSSPSNVVSKQPSRITNGQPQQTTGAASG) is disordered. A compositionally biased stretch (polar residues) spans 109–133 (SSPSNVVSKQPSRITNGQPQQTTGA). Ser110 and Ser160 each carry phosphoserine. Positions 145-207 (DAREDEMEEN…DIANTRAKKL (63 aa)) constitute a t-SNARE coiled-coil homology 2 domain.

The protein belongs to the SNAP-25 family. In terms of assembly, homotetramer (via coiled-coil domain), also forms heterotetramers with STX4 and VAMP3. Found in a complex with VAMP8 and STX1A. Found in a complex with VAMP8 and STX4 in pancreas. Interacts simultaneously with SNAPIN and SYN4. Interacts with STX1A. Interacts with STX12. Interacts tightly to multiple syntaxins and synaptobrevins/VAMPs. Interacts with ZDHHC13 (via ANK repeats). Interacts with ZDHHC17 (via ANK repeats).

It localises to the cell membrane. The protein resides in the synapse. It is found in the synaptosome. The protein localises to the cytoplasmic vesicle membrane. Essential component of the high affinity receptor for the general membrane fusion machinery and an important regulator of transport vesicle docking and fusion. In Rattus norvegicus (Rat), this protein is Synaptosomal-associated protein 23 (Snap23).